A 428-amino-acid polypeptide reads, in one-letter code: 3-phosphoshikimate 1-carboxyvinyltransferase (428 aa).

Residues Lys-19, Ser-20, and Arg-24 each coordinate 3-phosphoshikimate. Lys-19 is a binding site for phosphoenolpyruvate. Residues Gly-91 and Arg-119 each coordinate phosphoenolpyruvate. Positions 164, 166, 312, and 339 each coordinate 3-phosphoshikimate. Residue Gln-166 participates in phosphoenolpyruvate binding. Asp-312 functions as the Proton acceptor in the catalytic mechanism. Phosphoenolpyruvate-binding residues include Arg-343 and Arg-386.

It belongs to the EPSP synthase family. In terms of assembly, monomer.

It localises to the cytoplasm. The enzyme catalyses 3-phosphoshikimate + phosphoenolpyruvate = 5-O-(1-carboxyvinyl)-3-phosphoshikimate + phosphate. Its pathway is metabolic intermediate biosynthesis; chorismate biosynthesis; chorismate from D-erythrose 4-phosphate and phosphoenolpyruvate: step 6/7. In terms of biological role, catalyzes the transfer of the enolpyruvyl moiety of phosphoenolpyruvate (PEP) to the 5-hydroxyl of shikimate-3-phosphate (S3P) to produce enolpyruvyl shikimate-3-phosphate and inorganic phosphate. The protein is 3-phosphoshikimate 1-carboxyvinyltransferase of Bacillus pumilus (strain SAFR-032).